A 64-amino-acid polypeptide reads, in one-letter code: Large ribosomal subunit protein uL29 (64 aa).

The protein belongs to the universal ribosomal protein uL29 family.

The chain is Large ribosomal subunit protein uL29 from Burkholderia ambifaria (strain MC40-6).